A 128-amino-acid polypeptide reads, in one-letter code: Large ribosomal subunit protein uL22 (128 aa).

This sequence belongs to the universal ribosomal protein uL22 family. As to quaternary structure, part of the 50S ribosomal subunit.

This protein binds specifically to 23S rRNA; its binding is stimulated by other ribosomal proteins, e.g. L4, L17, and L20. It is important during the early stages of 50S assembly. It makes multiple contacts with different domains of the 23S rRNA in the assembled 50S subunit and ribosome. Its function is as follows. The globular domain of the protein is located near the polypeptide exit tunnel on the outside of the subunit, while an extended beta-hairpin is found that lines the wall of the exit tunnel in the center of the 70S ribosome. This Prochlorococcus marinus (strain MIT 9515) protein is Large ribosomal subunit protein uL22.